Consider the following 514-residue polypeptide: 2-isopropylmalate synthase (514 aa).

The Pyruvate carboxyltransferase domain maps to 5 to 267 (IYIFDTTLRD…HTDIVTEEIT (263 aa)). Residues Asp-14, His-202, His-204, and Asn-238 each coordinate Mn(2+). Positions 392–514 (KLKYYQVFTG…SKDLQKISAN (123 aa)) are regulatory domain.

This sequence belongs to the alpha-IPM synthase/homocitrate synthase family. LeuA type 1 subfamily. As to quaternary structure, homodimer. Mn(2+) is required as a cofactor.

It localises to the cytoplasm. It carries out the reaction 3-methyl-2-oxobutanoate + acetyl-CoA + H2O = (2S)-2-isopropylmalate + CoA + H(+). Its pathway is amino-acid biosynthesis; L-leucine biosynthesis; L-leucine from 3-methyl-2-oxobutanoate: step 1/4. Its function is as follows. Catalyzes the condensation of the acetyl group of acetyl-CoA with 3-methyl-2-oxobutanoate (2-ketoisovalerate) to form 3-carboxy-3-hydroxy-4-methylpentanoate (2-isopropylmalate). In Clostridium kluyveri (strain NBRC 12016), this protein is 2-isopropylmalate synthase.